Here is a 365-residue protein sequence, read N- to C-terminus: GTPase Obg (365 aa).

An Obg domain is found at 2 to 160 (ESFVDEVAIE…KFLRLSLKLL (159 aa)). An OBG-type G domain is found at 161-329 (ADVGIVGLPN…LLEAMDEAFF (169 aa)). Residues 167 to 174 (GLPNAGKS), 192 to 196 (FTTLS), 215 to 218 (DIPG), 282 to 285 (NKID), and 310 to 312 (SAD) contribute to the GTP site. The Mg(2+) site is built by S174 and T194.

It belongs to the TRAFAC class OBG-HflX-like GTPase superfamily. OBG GTPase family. In terms of assembly, monomer. It depends on Mg(2+) as a cofactor.

It localises to the cytoplasm. An essential GTPase which binds GTP, GDP and possibly (p)ppGpp with moderate affinity, with high nucleotide exchange rates and a fairly low GTP hydrolysis rate. Plays a role in control of the cell cycle, stress response, ribosome biogenesis and in those bacteria that undergo differentiation, in morphogenesis control. The chain is GTPase Obg from Leptospira borgpetersenii serovar Hardjo-bovis (strain JB197).